The following is a 104-amino-acid chain: Flagellar hook-basal body complex protein FliE (104 aa).

Belongs to the FliE family.

It is found in the bacterial flagellum basal body. This is Flagellar hook-basal body complex protein FliE from Salmonella agona (strain SL483).